Here is a 427-residue protein sequence, read N- to C-terminus: Tyrosine--tRNA ligase (427 aa).

Position 39 (Tyr-39) interacts with L-tyrosine. Residues 44–53 (PTSDSLHIGH) carry the 'HIGH' region motif. Tyr-178 and Gln-182 together coordinate L-tyrosine. Residues 238–242 (KFGKT) carry the 'KMSKS' region motif. Lys-241 provides a ligand contact to ATP. Residues 360–417 (ITLQQALVESKLVVSRAQARELISSNSITVNSKKQLKTEYIFCATDRLYNRFTLLRRG) enclose the S4 RNA-binding domain.

It belongs to the class-I aminoacyl-tRNA synthetase family. TyrS type 1 subfamily. Homodimer.

It is found in the cytoplasm. The enzyme catalyses tRNA(Tyr) + L-tyrosine + ATP = L-tyrosyl-tRNA(Tyr) + AMP + diphosphate + H(+). Catalyzes the attachment of tyrosine to tRNA(Tyr) in a two-step reaction: tyrosine is first activated by ATP to form Tyr-AMP and then transferred to the acceptor end of tRNA(Tyr). The polypeptide is Tyrosine--tRNA ligase (Blochmanniella pennsylvanica (strain BPEN)).